The following is a 181-amino-acid chain: Translationally-controlled tumor protein homolog (181 aa).

The region spanning 1 to 181 (MLIFKDAFTD…VKEALIEEKQ (181 aa)) is the TCTP domain.

It belongs to the TCTP family.

It is found in the cytoplasm. In terms of biological role, involved in calcium binding and microtubule stabilization. The polypeptide is Translationally-controlled tumor protein homolog (Brugia malayi (Filarial nematode worm)).